The following is a 100-amino-acid chain: Large ribosomal subunit protein uL23 (100 aa).

Belongs to the universal ribosomal protein uL23 family. As to quaternary structure, part of the 50S ribosomal subunit. Contacts protein L29, and trigger factor when it is bound to the ribosome.

Its function is as follows. One of the early assembly proteins it binds 23S rRNA. One of the proteins that surrounds the polypeptide exit tunnel on the outside of the ribosome. Forms the main docking site for trigger factor binding to the ribosome. This chain is Large ribosomal subunit protein uL23, found in Buchnera aphidicola subsp. Baizongia pistaciae (strain Bp).